The following is a 255-amino-acid chain: 1-(5-phosphoribosyl)-5-[(5-phosphoribosylamino)methylideneamino] imidazole-4-carboxamide isomerase (255 aa).

The active-site Proton acceptor is the aspartate 8. Residue aspartate 129 is the Proton donor of the active site.

The protein belongs to the HisA/HisF family.

The protein resides in the cytoplasm. The enzyme catalyses 1-(5-phospho-beta-D-ribosyl)-5-[(5-phospho-beta-D-ribosylamino)methylideneamino]imidazole-4-carboxamide = 5-[(5-phospho-1-deoxy-D-ribulos-1-ylimino)methylamino]-1-(5-phospho-beta-D-ribosyl)imidazole-4-carboxamide. Its pathway is amino-acid biosynthesis; L-histidine biosynthesis; L-histidine from 5-phospho-alpha-D-ribose 1-diphosphate: step 4/9. This is 1-(5-phosphoribosyl)-5-[(5-phosphoribosylamino)methylideneamino] imidazole-4-carboxamide isomerase from Prochlorococcus marinus (strain MIT 9301).